The chain runs to 339 residues: Transcription initiation factor IIB (339 aa).

The TFIIB-type zinc finger occupies 39 to 70; it reads EELICPMCGSKNIIKDYERAEIVCETCGCVLQ. 4 residues coordinate Zn(2+): C43, C46, C62, and C65. 2 repeat units span residues 156–239 and 250–331.

This sequence belongs to the TFIIB family.

Its function is as follows. Stabilizes TBP binding to an archaeal box-A promoter. Also responsible for recruiting RNA polymerase II to the pre-initiation complex (DNA-TBP-TFIIB). This chain is Transcription initiation factor IIB, found in Methanothermococcus thermolithotrophicus (Methanococcus thermolithotrophicus).